Consider the following 715-residue polypeptide: Solute carrier organic anion transporter family member 1C1 (715 aa).

The Cytoplasmic segment spans residues 1 to 43 (MDTSSKENAHLFHKNSAQPAGGPSFTVGYPSTEEARPCCGKLK). The chain crosses the membrane as a helical span at residues 44 to 63 (VFLGALSFVYFAKALAEGYL). Residues 64–82 (KSTVTQIERRFEIPSSLVG) lie on the Extracellular side of the membrane. A helical transmembrane segment spans residues 83–103 (IIDGSFEIGNLLVITFVSYFG). Residues 104-109 (AKLHRP) are Cytoplasmic-facing. A helical membrane pass occupies residues 110–134 (KIIGAGCLVMGFGTMLIAVPQFFME). Topologically, residues 135–187 (KYSYEKYERYSPSSNVTPSISPCYLESSSPSPSSILGKSQNKISHECVGDSSS) are extracellular. Residues 188-216 (SMWVYVFLGNLLRGLGETPIQPLGIAYLD) form a helical membrane-spanning segment. Topologically, residues 217–235 (DFASEDNAAFYIGCVQTVA) are cytoplasmic. A helical membrane pass occupies residues 236 to 256 (IIGPIFGFLLGSLCAKLYVDI). The Extracellular portion of the chain corresponds to 257–274 (GFVNLDHITITPKDPQWV). A helical transmembrane segment spans residues 275–299 (GAWWLGYLIAGFLSLLAAVPFWCLP). At 300-351 (KTLPRSQSRENSGSTSEKSKFIDDPIHYQMAPGDDKMKIMEMAKDFLPSLKT) the chain is on the cytoplasmic side. Residues 352–373 (LFRNPVYILYLCASTVQFNSLF) form a helical membrane-spanning segment. Topologically, residues 374-393 (GMVTYKPKYIEQQYGQSSSK) are extracellular. The helical transmembrane segment at 394–417 (ANFVIGLINIPAVALGIFSGGIVM) threads the bilayer. The Cytoplasmic segment spans residues 418-421 (KKFR). A helical transmembrane segment spans residues 422–445 (LGICEATKLYLGSSVFGYLLFLSL). The Extracellular portion of the chain corresponds to 446–557 (FALGCENSSV…NGCSQMFLYF (112 aa)). The N-linked (GlcNAc...) asparagine glycan is linked to Asn452. A Kazal-like domain is found at 473 to 528 (RALFSDCNSRCKCSDSKWEPMCGDNGITYVSACLAGCQSSSRSGKNIIFSNCTCVG). 3 cysteine pairs are disulfide-bonded: Cys479-Cys509, Cys485-Cys505, and Cys494-Cys526. N-linked (GlcNAc...) asparagine glycans are attached at residues Asn523 and Asn536. Residues 558-580 (LVISVITSYTLSLGGIPGYILLL) traverse the membrane as a helical segment. The Cytoplasmic portion of the chain corresponds to 581 to 589 (RCIQPQLKS). Residues 590-615 (FALGIYTLAVRVLAGIPAPVYFGVLI) traverse the membrane as a helical segment. The Extracellular portion of the chain corresponds to 616–649 (DTSCLKWGFKKCGSRGSCRLYDSHAFRHIYLGLT). Residues 650–667 (TLLGTVSVFLSMAVLFVL) traverse the membrane as a helical segment. Over 668-715 (KKKYVSKHSSLITTREKIGMSSSIKKETCAARDRGLQPKYWPGKETRL) the chain is Cytoplasmic.

Belongs to the organo anion transporter (TC 2.A.60) family. In terms of tissue distribution, widely expressed throughout the brain except in the cerebellum. Not detected in kidney, heart, lung, skeletal muscle, spleen, liver, nor testis. Highly expressed in cerebral microvessels throughout the brain and in the choroid plexus (at mRNA and protein level).

The protein localises to the cell membrane. The catalysed reaction is 3,3',5'-triiodo-L-thyronine(out) = 3,3',5'-triiodo-L-thyronine(in). It catalyses the reaction L-thyroxine(out) = L-thyroxine(in). It carries out the reaction L-thyroxine sulfate(out) = L-thyroxine sulfate(in). The enzyme catalyses 17beta-estradiol 17-O-(beta-D-glucuronate)(out) = 17beta-estradiol 17-O-(beta-D-glucuronate)(in). The catalysed reaction is 3,3',5-triiodo-L-thyronine(out) = 3,3',5-triiodo-L-thyronine(in). Mediates the Na(+)-independent high affinity transport of thyroid hormones at the plasma membrane of brain capillary endothelial cells. The transport activity of substrates L-thyroxine (T4) and 3,3',5'-triiodo-L-thyronine (reverse T3, rT3) is much greater than that of 3,3',5-triiodo-L-thyronine (T3). The prehormone, T4, is the major form in the circulating blood and is converted to the active form, T3, by the iodothyronine-deiodinase in peripheral organs. T3 plays an essential role in brain development via binding to specific nuclear receptors (thyroid hormone receptor). Also transports organic anions such as the conjugated steroid 17-beta-glucuronosyl estradiol (17beta-estradiol 17-O-(beta-D-glucuronate)). Transports T4 and estrone-3-sulfate in a pH-insensitive manner. May serve as a drug efflux system at the blood brain barrier. This chain is Solute carrier organic anion transporter family member 1C1 (Slco1c1), found in Mus musculus (Mouse).